We begin with the raw amino-acid sequence, 45 residues long: MEDVVRIVVEGEKVKMWDILGDYREVRGRVVEMDLVGHKIILEGE.

This is an uncharacterized protein from Archaeoglobus fulgidus (strain ATCC 49558 / DSM 4304 / JCM 9628 / NBRC 100126 / VC-16).